The sequence spans 805 residues: DNA gyrase subunit B (805 aa).

The Toprim domain maps to 431 to 546 (CEMYIVEGDS…NECVYIAQPP (116 aa)). Mg(2+) is bound by residues Glu-437, Asp-511, and Asp-513.

Belongs to the type II topoisomerase GyrB family. Heterotetramer, composed of two GyrA and two GyrB chains. In the heterotetramer, GyrA contains the active site tyrosine that forms a transient covalent intermediate with DNA, while GyrB binds cofactors and catalyzes ATP hydrolysis. Mg(2+) serves as cofactor. It depends on Mn(2+) as a cofactor. Requires Ca(2+) as cofactor.

It localises to the cytoplasm. It carries out the reaction ATP-dependent breakage, passage and rejoining of double-stranded DNA.. Functionally, a type II topoisomerase that negatively supercoils closed circular double-stranded (ds) DNA in an ATP-dependent manner to modulate DNA topology and maintain chromosomes in an underwound state. Negative supercoiling favors strand separation, and DNA replication, transcription, recombination and repair, all of which involve strand separation. Also able to catalyze the interconversion of other topological isomers of dsDNA rings, including catenanes and knotted rings. Type II topoisomerases break and join 2 DNA strands simultaneously in an ATP-dependent manner. In Chlamydia pneumoniae (Chlamydophila pneumoniae), this protein is DNA gyrase subunit B.